The chain runs to 75 residues: DNA-directed RNA polymerase subunit omega (75 aa).

This sequence belongs to the RNA polymerase subunit omega family. In cyanobacteria the RNAP catalytic core is composed of 2 alpha, 1 beta, 1 beta', 1 gamma and 1 omega subunit. When a sigma factor is associated with the core the holoenzyme is formed, which can initiate transcription.

It catalyses the reaction RNA(n) + a ribonucleoside 5'-triphosphate = RNA(n+1) + diphosphate. Its function is as follows. Promotes RNA polymerase assembly. Latches the N- and C-terminal regions of the beta' subunit thereby facilitating its interaction with the beta and alpha subunits. The protein is DNA-directed RNA polymerase subunit omega of Prochlorococcus marinus (strain MIT 9211).